Reading from the N-terminus, the 498-residue chain is GTPase Der (498 aa).

EngA-type G domains follow at residues 3–167 (PVVA…FDDL) and 210–383 (IKLA…KSAT). GTP is bound by residues 9–16 (GRPNVGKS), 57–61 (DTGGI), 119–122 (NKID), 216–223 (GRPNVGKS), 263–267 (DTAGV), and 328–331 (NKWD). One can recognise a KH-like domain in the interval 384–468 (TRVGTSVLTR…PIRINFQNSE (85 aa)).

The protein belongs to the TRAFAC class TrmE-Era-EngA-EngB-Septin-like GTPase superfamily. EngA (Der) GTPase family. Associates with the 50S ribosomal subunit.

In terms of biological role, GTPase that plays an essential role in the late steps of ribosome biogenesis. In Vibrio parahaemolyticus serotype O3:K6 (strain RIMD 2210633), this protein is GTPase Der.